Reading from the N-terminus, the 735-residue chain is Transcription initiation factor IIF subunit alpha (735 aa).

6 disordered regions span residues 1–68 (MSRR…EYAE), 165–263 (EYKK…TANL), 297–323 (NEPE…AKRG), 446–465 (KAVA…NSEV), 471–606 (EEFA…HKEP), and 631–674 (PEGE…EETP). Over residues 33 to 54 (RMRMGQNGSNSSSPGVPNGDNS) the composition is skewed to low complexity. Basic and acidic residues-rich tracts occupy residues 59–68 (VKKDDPEYAE) and 165–174 (EYKKKAEQER). A compositionally biased stretch (polar residues) spans 175–219 (STPNSGGMNKSGTVSLNNTVKDGSQTPTVDSVTKDNTANGVNSSI). At Ser-198 the chain carries Phosphoserine. Position 200 is a phosphothreonine (Thr-200). Positions 220-238 (PTVTGSSVPPASPTTVSAV) are enriched in low complexity. Positions 239 to 263 (ESNGLSNGSTSAANGLDGNASTANL) are enriched in polar residues. Acidic residues-rich tracts occupy residues 453–465 (AMDE…NSEV) and 471–480 (EEFADDEEAP). The segment covering 487–500 (QENKESEQRIKKEM) has biased composition (basic and acidic residues). Residues 513-522 (APSENEEDEL) are compositionally biased toward acidic residues. Ser-515 bears the Phosphoserine mark. Residues 523-536 (FGEKKIDEDGERIK) are compositionally biased toward basic and acidic residues. Residues Ser-560, Ser-562, and Ser-571 each carry the phosphoserine modification. The segment covering 564-583 (IENKENESPVKKEEDSDTLS) has biased composition (basic and acidic residues). Residues 584–595 (KSKRSSPKKQQK) are compositionally biased toward basic residues. A compositionally biased stretch (polar residues) spans 636 to 654 (NPQTTKAVDSSNNASNTVP). Ser-655 is subject to Phosphoserine.

The protein belongs to the TFIIF alpha subunit family. In terms of assembly, TFIIF is composed of three different subunits: TFG1/RAP74, TFG2/RAP30 and TAF14. Post-translationally, phosphorylated on Ser and other residues by TAF1 and casein kinase II-like kinases.

The protein resides in the nucleus. Functionally, TFIIF is a general transcription initiation factor that binds to RNA polymerase II. Its functions include the recruitment of RNA polymerase II to the promoter bound DNA-TBP-TFIIB complex, decreasing the affinity of RNA polymerase II for non-specific DNA, allowing for the subsequent recruitment of TFIIE and TFIIH, and facilitating RNA polymerase II elongation. The protein is Transcription initiation factor IIF subunit alpha (TFG1) of Saccharomyces cerevisiae (strain ATCC 204508 / S288c) (Baker's yeast).